The chain runs to 138 residues: Phospholipase A2 EC1 (138 aa).

A signal peptide spans 1-16; the sequence is MRTLWIVAVWLMSVEG. 7 disulfide bridges follow: cysteine 42-cysteine 131, cysteine 44-cysteine 60, cysteine 59-cysteine 111, cysteine 65-cysteine 138, cysteine 66-cysteine 104, cysteine 73-cysteine 97, and cysteine 91-cysteine 102. Ca(2+)-binding residues include tyrosine 43, glycine 45, and glycine 47. The active site involves histidine 63. A Ca(2+)-binding site is contributed by aspartate 64. Aspartate 105 is an active-site residue.

This sequence belongs to the phospholipase A2 family. Group II subfamily. The cofactor is Ca(2+).

The protein resides in the secreted. It carries out the reaction a 1,2-diacyl-sn-glycero-3-phosphocholine + H2O = a 1-acyl-sn-glycero-3-phosphocholine + a fatty acid + H(+). The chain is Phospholipase A2 EC1 from Echis coloratus (Carpet viper).